A 206-amino-acid chain; its full sequence is Cytidylate kinase (206 aa).

9-17 provides a ligand contact to ATP; sequence GPAAAGKGT.

It belongs to the cytidylate kinase family. Type 1 subfamily.

The protein resides in the cytoplasm. The catalysed reaction is CMP + ATP = CDP + ADP. It catalyses the reaction dCMP + ATP = dCDP + ADP. The polypeptide is Cytidylate kinase (Cereibacter sphaeroides (strain ATCC 17023 / DSM 158 / JCM 6121 / CCUG 31486 / LMG 2827 / NBRC 12203 / NCIMB 8253 / ATH 2.4.1.) (Rhodobacter sphaeroides)).